An 872-amino-acid chain; its full sequence is DNA mismatch repair protein MutS (872 aa).

Position 622-629 (622-629 (GPNMAGKS)) interacts with ATP.

Belongs to the DNA mismatch repair MutS family.

This protein is involved in the repair of mismatches in DNA. It is possible that it carries out the mismatch recognition step. This protein has a weak ATPase activity. The chain is DNA mismatch repair protein MutS from Geotalea uraniireducens (strain Rf4) (Geobacter uraniireducens).